Reading from the N-terminus, the 541-residue chain is Circadian clock oscillator protein KaiC (541 aa).

The segment at 1-40 is disordered; that stretch reads MNQSLGPSEPEKPQDNTAEDSTEPTPDNHRADLSELRGIP. KaiC domains follow at residues 21–268 and 282–541; these read STEP…INIF and VRVS…EEGL. A compositionally biased stretch (basic and acidic residues) spans 26–35; that stretch reads PDNHRADLSE. Residues glycine 70, threonine 71, glycine 72, lysine 73, threonine 74, leucine 75, serine 110, lysine 245, leucine 246, arginine 247, threonine 249, histidine 251, threonine 261, threonine 311, glycine 312, threonine 313, glycine 314, lysine 315, and threonine 316 each coordinate ATP. Threonine 74 provides a ligand contact to Mg(2+). Mg(2+) is bound by residues threonine 316 and glutamate 339. Tryptophan 352 contacts ATP. Serine 452 is modified (phosphoserine; by autocatalysis). A Phosphothreonine; by autocatalysis modification is found at threonine 453. Positions 472, 478, 479, 480, 482, 484, and 486 each coordinate ATP.

The protein belongs to the KaiC family. As to quaternary structure, homohexamer; hexamerization is dependent on ATP-binding. The KaiABC complex composition changes during the circadian cycle to control KaiC phosphorylation. Complexes KaiC(6), KaiA(2-4):KaiC(6), KaiB(6):KaiC(6) and KaiC(6):KaiB(6):KaiA(12) are among the most important forms, many form cooperatively. KaiC interacts with SasA, activating its autokinase function and leading to RpaA activation. Mg(2+) is required as a cofactor. Post-translationally, phosphorylated on serine and threonine residues by autocatalysis. Has a 4 step phosphorylation cycle; the autokinase acts first on Thr-453, then Ser-452. When Ser-452 is modified KaiC switches to an autophosphatase mode, acting first on phospho-Thr-453 then phospho-Ser-452.

It catalyses the reaction L-seryl-[protein] + ATP = O-phospho-L-seryl-[protein] + ADP + H(+). It carries out the reaction L-threonyl-[protein] + ATP = O-phospho-L-threonyl-[protein] + ADP + H(+). The catalysed reaction is ATP + H2O = ADP + phosphate + H(+). Its activity is regulated as follows. The interaction with KaiA enhances its phosphorylation status, while the interaction with KaiB decreases it. In terms of biological role, central component of the KaiABC oscillator complex, which constitutes the main circadian regulator in cyanobacteria. Complex composition changes during the circadian cycle to control KaiC phosphorylation. KaiA stimulates KaiC autophosphorylation, while KaiB sequesters KaiA, leading to KaiC autodephosphorylation. Clock output pathways impact the RpaA transcriptional regulator. KaiC enhances the autophosphorylation activity of SasA, which then transfers its phosphate group to RpaA to activate it. KaiB and KaiC together enhance the phospho-RpaA dephosphatase activity of CikA. Its function is as follows. Has a weak, temperature-independent ATPase activity; ATPase activity defines the circadian period. The phosphorylation state of KaiC modulates its ATPase activity and effects KaiB binding. In Parathermosynechococcus lividus (Thermostichus lividus), this protein is Circadian clock oscillator protein KaiC.